We begin with the raw amino-acid sequence, 152 residues long: Deoxyuridine 5'-triphosphate nucleotidohydrolase (152 aa).

Substrate contacts are provided by residues 71–73, Asn-84, 88–90, and Met-98; these read RSG and LID.

Belongs to the dUTPase family. The cofactor is Mg(2+).

The catalysed reaction is dUTP + H2O = dUMP + diphosphate + H(+). Its pathway is pyrimidine metabolism; dUMP biosynthesis; dUMP from dCTP (dUTP route): step 2/2. Its function is as follows. This enzyme is involved in nucleotide metabolism: it produces dUMP, the immediate precursor of thymidine nucleotides and it decreases the intracellular concentration of dUTP so that uracil cannot be incorporated into DNA. The protein is Deoxyuridine 5'-triphosphate nucleotidohydrolase of Shewanella sediminis (strain HAW-EB3).